A 265-amino-acid chain; its full sequence is tRNA (guanine-N(7)-)-methyltransferase (265 aa).

Residues 1–40 form a disordered region; sequence MIHDDDPNAPGAPHDDDATAAPASATRAAPAAGDDDDANP. Over residues 19-32 the composition is skewed to low complexity; it reads TAAPASATRAAPAA. S-adenosyl-L-methionine is bound by residues glutamate 95, glutamate 120, aspartate 147, and aspartate 170. Residue aspartate 170 is part of the active site. Substrate is bound by residues lysine 174, aspartate 206, and 241–244; that span reads TKFE.

It belongs to the class I-like SAM-binding methyltransferase superfamily. TrmB family.

The enzyme catalyses guanosine(46) in tRNA + S-adenosyl-L-methionine = N(7)-methylguanosine(46) in tRNA + S-adenosyl-L-homocysteine. The protein operates within tRNA modification; N(7)-methylguanine-tRNA biosynthesis. Its function is as follows. Catalyzes the formation of N(7)-methylguanine at position 46 (m7G46) in tRNA. This Burkholderia pseudomallei (strain 1710b) protein is tRNA (guanine-N(7)-)-methyltransferase.